The sequence spans 158 residues: MRCPYCQSEDTQVKDSRPAEDGAVIRRRRVCSVCGGRFTTFERVQLRDLMVVKKSGRRVPFDRDKLTRSIEVALRKRDVDNDRVERAISGIVRQLESSGEAEVTSDEIGRLAMDALKGIDDIAYIRFASVYRNFSKAVDFHNVIDELTVAETEDDLDA.

The interval 1–20 is disordered; that stretch reads MRCPYCQSEDTQVKDSRPAE. A zinc finger lies at 3–34; it reads CPYCQSEDTQVKDSRPAEDGAVIRRRRVCSVC. The span at 11 to 20 shows a compositional bias: basic and acidic residues; sequence TQVKDSRPAE. Residues 49 to 139 enclose the ATP-cone domain; the sequence is LMVVKKSGRR…VYRNFSKAVD (91 aa).

The protein belongs to the NrdR family. Zn(2+) is required as a cofactor.

Negatively regulates transcription of bacterial ribonucleotide reductase nrd genes and operons by binding to NrdR-boxes. The sequence is that of Transcriptional repressor NrdR from Brucella anthropi (strain ATCC 49188 / DSM 6882 / CCUG 24695 / JCM 21032 / LMG 3331 / NBRC 15819 / NCTC 12168 / Alc 37) (Ochrobactrum anthropi).